The primary structure comprises 1830 residues: Dedicator of cytokinesis protein 2 (1830 aa).

Positions 8 to 69 (DKERHGVAIY…PKSFIHIKEV (62 aa)) constitute an SH3 domain. Residue Lys304 is modified to N6-acetyllysine. The 185-residue stretch at 423 to 607 (RNDIYITLLQ…DVFSISTLVC (185 aa)) folds into the C2 DOCK-type domain. 2 positions are modified to phosphoserine: Ser588 and Ser593. Lys738 carries the N6-acetyllysine modification. An interaction with CRKL region spans residues 939–1476 (CMTAILNQMG…TSFVTAYKLP (538 aa)). Residues 1211–1622 (YKDNNREEMY…VEKEYGVREM (412 aa)) enclose the DOCKER domain. The span at 1651–1665 (MNSDCSTPSKPTSES) shows a compositional bias: polar residues. Residues 1651–1704 (MNSDCSTPSKPTSESFDLELASPKTPRVEQEEPISPGSTLPEVKLRRSKKRTKR) are disordered. Phosphoserine occurs at positions 1685, 1706, 1731, and 1784.

Belongs to the DOCK family. In terms of assembly, homodimer. Interacts with RAC1 and RAC2. Interacts with CRKL and VAV. Interacts with CD3Z. As to expression, specifically expressed in hematopoietic cells. Highly expressed in peripheral blood leukocytes, and expressed at intermediate level in thymus and spleen. Expressed at very low level in the small intestine and colon.

It localises to the endomembrane system. The protein resides in the cytoplasm. The protein localises to the cytoskeleton. Functionally, involved in cytoskeletal rearrangements required for lymphocyte migration in response of chemokines. Activates RAC1 and RAC2, but not CDC42, by functioning as a guanine nucleotide exchange factor (GEF), which exchanges bound GDP for free GTP. May also participate in IL2 transcriptional activation via the activation of RAC2. The sequence is that of Dedicator of cytokinesis protein 2 (DOCK2) from Homo sapiens (Human).